The primary structure comprises 403 residues: S-adenosylmethionine synthase (403 aa).

His-16 contacts ATP. Residue Asp-18 participates in Mg(2+) binding. Glu-44 lines the K(+) pocket. 2 residues coordinate L-methionine: Glu-57 and Gln-100. The tract at residues 100–110 (QSSDIAQGVDR) is flexible loop. Residues 165–167 (DAK), Asp-242, 248–249 (RK), Ala-265, and Lys-269 each bind ATP. L-methionine is bound at residue Asp-242. Lys-273 lines the L-methionine pocket.

The protein belongs to the AdoMet synthase family. As to quaternary structure, homotetramer; dimer of dimers. Requires Mg(2+) as cofactor. K(+) serves as cofactor.

Its subcellular location is the cytoplasm. It catalyses the reaction L-methionine + ATP + H2O = S-adenosyl-L-methionine + phosphate + diphosphate. It functions in the pathway amino-acid biosynthesis; S-adenosyl-L-methionine biosynthesis; S-adenosyl-L-methionine from L-methionine: step 1/1. Catalyzes the formation of S-adenosylmethionine (AdoMet) from methionine and ATP. The overall synthetic reaction is composed of two sequential steps, AdoMet formation and the subsequent tripolyphosphate hydrolysis which occurs prior to release of AdoMet from the enzyme. The chain is S-adenosylmethionine synthase from Nitrosococcus oceani (strain ATCC 19707 / BCRC 17464 / JCM 30415 / NCIMB 11848 / C-107).